The following is a 500-amino-acid chain: MKNSNEISSSQSLKNNGSDGFFNTSLMYVLAACLASFLFGYQVSVLNTIKDFIVIEFGWCAGKEVNCDDSTLKSSFLLASVFIGAVVGSGFSGFLVQHGRRFSLLVIYNFFILVSILTSITHHFHTILFSRLLSGFGIGLITVSVPMYISEMTHKDKKGAYGVLHQLFITFGIFIAVLLGMAMGNVPEEVNNPLGTFQQIWWRLMFFFPCIISILGIVLLTFFFKEETPYYLFEKGKVEESKEILKKIYGSDDVDEPLKAIKDAVEQNEAAKKNSISLMRAMKIPSYRYVILLGCILSGLQQFTGINVLVSNSNALYKGFLTNEWITTLSVIMTVVNFLMTFPAIYIVEKLGRKTLLLCGCAGIVCAFLPTAIANLINNTSDVVKKLSISATFVMIVSFAVSYGPVLWIYLHEMFPSEIKDSAASLASLVNWMCAIIVVFPSDIIIKQSPTILFFIFSGMSIVAFLFIFFFIKETKGGEIGTSPYITLEERQKHMGKSVV.

Residues 1 to 25 (MKNSNEISSSQSLKNNGSDGFFNTS) are Cytoplasmic-facing. Residues 26–46 (LMYVLAACLASFLFGYQVSVL) traverse the membrane as a helical segment. Residues 47 to 75 (NTIKDFIVIEFGWCAGKEVNCDDSTLKSS) are Extracellular-facing. An intrachain disulfide couples Cys-60 to Cys-67. Residues 76 to 96 (FLLASVFIGAVVGSGFSGFLV) form a helical membrane-spanning segment. Residues 97 to 101 (QHGRR) lie on the Cytoplasmic side of the membrane. A helical membrane pass occupies residues 102 to 122 (FSLLVIYNFFILVSILTSITH). The Extracellular segment spans residues 123 to 131 (HFHTILFSR). Residues 132 to 152 (LLSGFGIGLITVSVPMYISEM) form a helical membrane-spanning segment. At 153–166 (THKDKKGAYGVLHQ) the chain is on the cytoplasmic side. Gln-166 contacts alpha-D-glucose. Gln-166 contacts beta-D-glucose. The helical transmembrane segment at 167–187 (LFITFGIFIAVLLGMAMGNVP) threads the bilayer. At 188–203 (EEVNNPLGTFQQIWWR) the chain is on the extracellular side. The helical transmembrane segment at 204–224 (LMFFFPCIISILGIVLLTFFF) threads the bilayer. At 225-289 (KEETPYYLFE…RAMKIPSYRY (65 aa)) the chain is on the cytoplasmic side. Residues 290-310 (VILLGCILSGLQQFTGINVLV) traverse the membrane as a helical segment. Residues Gln-301, Gln-302, and Asn-307 each coordinate alpha-D-glucose. Gln-301 contacts beta-D-glucose. Position 307 (Asn-307) interacts with beta-D-glucose. Topologically, residues 311-327 (SNSNALYKGFLTNEWIT) are extracellular. Residues 328–348 (TLSVIMTVVNFLMTFPAIYIV) traverse the membrane as a helical segment. Residue Asn-337 coordinates beta-D-glucose. Residues 349–356 (EKLGRKTL) lie on the Cytoplasmic side of the membrane. Residues 357-377 (LLCGCAGIVCAFLPTAIANLI) form a helical membrane-spanning segment. The Extracellular portion of the chain corresponds to 378-390 (NNTSDVVKKLSIS). A helical membrane pass occupies residues 391–411 (ATFVMIVSFAVSYGPVLWIYL). Trp-408 contributes to the alpha-D-glucose binding site. Topologically, residues 412–425 (HEMFPSEIKDSAAS) are cytoplasmic. A helical transmembrane segment spans residues 426-446 (LASLVNWMCAIIVVFPSDIII). Residues 447 to 451 (KQSPT) are Extracellular-facing. A helical membrane pass occupies residues 452-472 (ILFFIFSGMSIVAFLFIFFFI). The Cytoplasmic portion of the chain corresponds to 473-500 (KETKGGEIGTSPYITLEERQKHMGKSVV).

Belongs to the major facilitator superfamily. Sugar transporter (TC 2.A.1.1) family. As to quaternary structure, homodimer.

It is found in the cell membrane. The enzyme catalyses D-glucose(out) = D-glucose(in). The catalysed reaction is D-fructose(out) = D-fructose(in). It carries out the reaction D-galactose(in) = D-galactose(out). It catalyses the reaction D-mannose(out) = D-mannose(in). The enzyme catalyses D-glucosamine(out) = D-glucosamine(in). The catalysed reaction is D-xylose(out) = D-xylose(in). Its activity is regulated as follows. Inhibited by cytochalasin B. Its function is as follows. Sodium-independent facilitative hexose transporter. Can transport D-glucose and D-fructose. Can transport D-mannose, D-galactose, D-xylose and D-glucosamine. In Plasmodium knowlesi, this protein is Hexose transporter 1.